Here is a 1162-residue protein sequence, read N- to C-terminus: Carbamoyl phosphate synthase large chain (1162 aa).

A carboxyphosphate synthetic domain region spans residues 1-456 (MPKRTDIKSI…SLQKALRGLE (456 aa)). 12 residues coordinate ATP: Arg129, Arg222, Gly228, Gly229, Glu261, Val263, Glu268, Gly294, Val295, His296, Gln338, and Glu352. The ATP-grasp 1 domain maps to 186-381 (ETEWQLGEVE…IAKVAAKLAV (196 aa)). Mg(2+) is bound by residues Gln338, Glu352, and Asn354. 3 residues coordinate Mn(2+): Gln338, Glu352, and Asn354. The segment at 457–613 (TGLTGFDEIA…PFVGQPRSEA (157 aa)) is oligomerization domain. The tract at residues 614-1025 (EVSDRKKVVI…AFAKAQLGAG (412 aa)) is carbamoyl phosphate synthetic domain. The ATP-grasp 2 domain occupies 742 to 954 (QKLLIKLDLN…IAKVAARIMA (213 aa)). ATP contacts are provided by Arg778, Thr838, Leu840, Glu845, Gly870, Ile871, His872, Ser873, Gln913, and Glu925. Residues Gln913, Glu925, and Asn927 each contribute to the Mg(2+) site. Gln913, Glu925, and Asn927 together coordinate Mn(2+). Positions 1026 to 1162 (VELPREGTVF…VRPLQDYFRS (137 aa)) constitute an MGS-like domain. Residues 1026–1162 (VELPREGTVF…VRPLQDYFRS (137 aa)) form an allosteric domain region.

This sequence belongs to the CarB family. Composed of two chains; the small (or glutamine) chain promotes the hydrolysis of glutamine to ammonia, which is used by the large (or ammonia) chain to synthesize carbamoyl phosphate. Tetramer of heterodimers (alpha,beta)4. Requires Mg(2+) as cofactor. It depends on Mn(2+) as a cofactor.

The enzyme catalyses hydrogencarbonate + L-glutamine + 2 ATP + H2O = carbamoyl phosphate + L-glutamate + 2 ADP + phosphate + 2 H(+). It catalyses the reaction hydrogencarbonate + NH4(+) + 2 ATP = carbamoyl phosphate + 2 ADP + phosphate + 2 H(+). It participates in amino-acid biosynthesis; L-arginine biosynthesis; carbamoyl phosphate from bicarbonate: step 1/1. Its pathway is pyrimidine metabolism; UMP biosynthesis via de novo pathway; (S)-dihydroorotate from bicarbonate: step 1/3. In terms of biological role, large subunit of the glutamine-dependent carbamoyl phosphate synthetase (CPSase). CPSase catalyzes the formation of carbamoyl phosphate from the ammonia moiety of glutamine, carbonate, and phosphate donated by ATP, constituting the first step of 2 biosynthetic pathways, one leading to arginine and/or urea and the other to pyrimidine nucleotides. The large subunit (synthetase) binds the substrates ammonia (free or transferred from glutamine from the small subunit), hydrogencarbonate and ATP and carries out an ATP-coupled ligase reaction, activating hydrogencarbonate by forming carboxy phosphate which reacts with ammonia to form carbamoyl phosphate. The chain is Carbamoyl phosphate synthase large chain from Brucella suis biovar 1 (strain 1330).